We begin with the raw amino-acid sequence, 322 residues long: Ribokinase (322 aa).

Substrate contacts are provided by residues 25-27, 53-57, and Glu-154; these read MTD and GKGAN. ATP-binding positions include Asn-199, 235 to 240, and Thr-256; that span reads TLGAEG. Asp-263 and Thr-265 together coordinate K(+). Residues 268–269 and Asn-295 contribute to the ATP site; that span reads GD. Residue Asp-269 participates in substrate binding. The active-site Proton acceptor is Asp-269. K(+) contacts are provided by Ser-301, Ala-304, Gly-306, and Ser-310.

Belongs to the carbohydrate kinase PfkB family. Ribokinase subfamily. As to quaternary structure, homodimer. The cofactor is Mg(2+).

It is found in the cytoplasm. The protein resides in the nucleus. It carries out the reaction D-ribose + ATP = D-ribose 5-phosphate + ADP + H(+). The protein operates within carbohydrate metabolism; D-ribose degradation; D-ribose 5-phosphate from beta-D-ribopyranose: step 2/2. Activated by a monovalent cation that binds near, but not in, the active site. The most likely occupant of the site in vivo is potassium. Ion binding induces a conformational change that may alter substrate affinity. Competitively inhibited by phosphonoacetic acid, etidronate, 2-carboxethylphosphonic acid, N-(phosphonomethyl)glycine, N-(phosphonomethyl)iminodiacetic acid and clodronate. Its function is as follows. Catalyzes the phosphorylation of ribose at O-5 in a reaction requiring ATP and magnesium. The resulting D-ribose-5-phosphate can then be used either for sythesis of nucleotides, histidine, and tryptophan, or as a component of the pentose phosphate pathway. This Homo sapiens (Human) protein is Ribokinase.